The following is a 298-amino-acid chain: HTH-type transcriptional regulator ArgP (298 aa).

The region spanning 4-60 (LDYRWIEALDSVVSKGSFERAAEQLFISQSAVSQRIKQLEKYLAQPVLIREQPPRPT) is the HTH lysR-type domain. Positions 21–40 (FERAAEQLFISQSAVSQRIK) form a DNA-binding region, H-T-H motif.

This sequence belongs to the LysR transcriptional regulatory family. As to quaternary structure, homodimer.

Its function is as follows. Controls the transcription of genes involved in arginine and lysine metabolism. The sequence is that of HTH-type transcriptional regulator ArgP from Vibrio cholerae serotype O1 (strain ATCC 39315 / El Tor Inaba N16961).